A 454-amino-acid polypeptide reads, in one-letter code: tRNA modification GTPase MnmE (454 aa).

3 residues coordinate (6S)-5-formyl-5,6,7,8-tetrahydrofolate: R23, E80, and K120. Positions 216–377 (GMKVVIAGRP…LRNHLKQSMG (162 aa)) constitute a TrmE-type G domain. N226 is a binding site for K(+). Residues 226–231 (NAGKSS), 245–251 (TDIAGTT), 270–273 (DTAG), 335–338 (NKAD), and 358–360 (SAR) each bind GTP. S230 lines the Mg(2+) pocket. The K(+) site is built by T245, I247, and T250. Residue T251 coordinates Mg(2+). A (6S)-5-formyl-5,6,7,8-tetrahydrofolate-binding site is contributed by K454.

This sequence belongs to the TRAFAC class TrmE-Era-EngA-EngB-Septin-like GTPase superfamily. TrmE GTPase family. In terms of assembly, homodimer. Heterotetramer of two MnmE and two MnmG subunits. K(+) serves as cofactor.

It is found in the cytoplasm. Exhibits a very high intrinsic GTPase hydrolysis rate. Involved in the addition of a carboxymethylaminomethyl (cmnm) group at the wobble position (U34) of certain tRNAs, forming tRNA-cmnm(5)s(2)U34. The protein is tRNA modification GTPase MnmE of Salmonella typhimurium (strain LT2 / SGSC1412 / ATCC 700720).